A 393-amino-acid chain; its full sequence is Decapping nuclease dom-3 (393 aa).

The tract at residues M1–L37 is disordered. The segment covering G17–H28 has biased composition (basic and acidic residues). Substrate contacts are provided by residues R74, E113, and W144–G146. E205, E257, D259, E269, and L270 together coordinate Mg(2+). E257 lines the substrate pocket. K271 and Q293 together coordinate substrate.

This sequence belongs to the DXO/Dom3Z family. The cofactor is Mg(2+).

It carries out the reaction a 5'-end NAD(+)-phospho-ribonucleoside in mRNA + H2O = a 5'-end phospho-ribonucleoside in mRNA + NAD(+) + H(+). It catalyses the reaction a 5'-end (N(7)-methyl 5'-triphosphoguanosine)-ribonucleoside-ribonucleotide in mRNA + H2O = a (N(7)-methyl 5'-triphosphoguanosine)-nucleoside + a 5'-end phospho-ribonucleoside in mRNA + H(+). The enzyme catalyses a 5'-end triphospho-ribonucleoside in mRNA + H2O = a 5'-end phospho-ribonucleoside in mRNA + diphosphate + H(+). Decapping enzyme for NAD-capped RNAs: specifically hydrolyzes the nicotinamide adenine dinucleotide (NAD) cap from a subset of RNAs by removing the entire NAD moiety from the 5'-end of an NAD-capped RNA. The NAD-cap is present at the 5'-end of some RNAs and snoRNAs. In contrast to the canonical 5'-end N7 methylguanosine (m7G) cap, the NAD cap promotes mRNA decay. Also acts as a non-canonical decapping enzyme that removes the entire cap structure of m7G capped or incompletely capped RNAs and mediates their subsequent degradation. Specifically degrades pre-mRNAs with a defective 5'-end m7G cap and is part of a pre-mRNA capping quality control. Also possesses RNA 5'-pyrophosphohydrolase activity by hydrolyzing the 5'-end triphosphate to release pyrophosphates. The sequence is that of Decapping nuclease dom-3 from Caenorhabditis elegans.